Consider the following 159-residue polypeptide: Cytochrome c-type biogenesis protein CcmE (159 aa).

Topologically, residues 1–23 (MSSQSFHNSPSLRVILKQRKKKR) are cytoplasmic. The chain crosses the membrane as a helical; Signal-anchor for type II membrane protein span at residues 24–44 (LLIVLFCCLIIAIATSLITYA). Topologically, residues 45-159 (LRNTVSFFRM…RLNKHHRVEK (115 aa)) are periplasmic. The heme site is built by His-138 and Tyr-142.

It belongs to the CcmE/CycJ family.

The protein localises to the cell inner membrane. In terms of biological role, heme chaperone required for the biogenesis of c-type cytochromes. Transiently binds heme delivered by CcmC and transfers the heme to apo-cytochromes in a process facilitated by CcmF and CcmH. This Bartonella henselae (strain ATCC 49882 / DSM 28221 / CCUG 30454 / Houston 1) (Rochalimaea henselae) protein is Cytochrome c-type biogenesis protein CcmE.